Consider the following 276-residue polypeptide: uncharacterized protein (276 aa).

Residues 20 to 137 (PVLIFIPGAN…PPINTFLPDS (118 aa)) form the AB hydrolase-1 domain. The tract at residues 57-76 (GESELTEPLPDSASNPDSDY) is disordered.

It belongs to the AB hydrolase superfamily.

This is an uncharacterized protein from Staphylococcus aureus (strain MW2).